The sequence spans 155 residues: Small ribosomal subunit protein uS7cz/uS7cy (155 aa).

Belongs to the universal ribosomal protein uS7 family. Part of the 30S ribosomal subunit.

It is found in the plastid. The protein localises to the chloroplast. Its function is as follows. One of the primary rRNA binding proteins, it binds directly to 16S rRNA where it nucleates assembly of the head domain of the 30S subunit. The sequence is that of Small ribosomal subunit protein uS7cz/uS7cy (rps7-A) from Calycanthus floridus var. glaucus (Eastern sweetshrub).